The following is a 1091-amino-acid chain: ATP-citrate synthase (1091 aa).

The ATP-grasp domain maps to 4–265 (KAISEQTGKE…LDAKSGASLK (262 aa)). Lys-58, Arg-66, Gly-67, Pro-109, Val-111, and Glu-118 together coordinate ATP. Residue Tyr-131 is modified to Phosphotyrosine. ATP is bound at residue Asp-216. Residues Asp-257, Ser-260, and Ala-262 each coordinate Mg(2+). Ser-263 carries the phosphoserine modification. Residues Gly-309, Asn-346, Thr-348, Tyr-364, and Arg-379 each contribute to the citrate site. A compositionally biased stretch (low complexity) spans 442–457 (SGSTSTPAPSRTASFS). The segment at 442–471 (SGSTSTPAPSRTASFSESRTDEVAPAKKAK) is disordered. The residue at position 447 (Thr-447) is a Phosphothreonine. Ser-451 carries the post-translational modification Phosphoserine. The residue at position 455 (Ser-455) is a Phosphoserine; by PKA and PKB/AKT1 or PKB/AKT2 or BCKDK. Phosphoserine is present on Ser-459. 3 positions are modified to N6-acetyllysine; alternate: Lys-530, Lys-536, and Lys-544. Residues Lys-530, Lys-536, and Lys-544 each participate in a glycyl lysine isopeptide (Lys-Gly) (interchain with G-Cter in ubiquitin); alternate cross-link. A Phosphothreonine modification is found at Thr-629. Ser-653 is modified (phosphoserine). Phosphotyrosine is present on Tyr-672. Residue His-750 is the Tele-phosphohistidine intermediate of the active site. CoA is bound at residue 769–779 (LKEAGVFVPRS). Ser-829 bears the Phosphoserine mark. N6-acetyllysine occurs at positions 938, 958, 968, and 1067. Ser-1090 carries the phosphoserine modification.

In the N-terminal section; belongs to the succinate/malate CoA ligase beta subunit family. It in the C-terminal section; belongs to the succinate/malate CoA ligase alpha subunit family. In terms of assembly, homotetramer. Requires Mg(2+) as cofactor. Phosphorylated by PKA and GSK3 in a sequential manner; phosphorylation results in activation of its activity. Phosphorylation on Thr-447 and Ser-451 depends on the phosphorylation state of Ser-455. Phosphorylation on Ser-455 is decreased by prior phosphorylation on the other 2 residues. Phosphorylated at Ser-455 by BCKDK and dephosphorylated by protein phosphatase PPM1K. Post-translationally, ISGylated. In terms of processing, acetylated at Lys-530, Lys-536 and Lys-544 by KAT2B/PCAF. Acetylation is promoted by glucose and stabilizes the protein, probably by preventing ubiquitination at the same sites. Acetylation promotes de novo lipid synthesis. Deacetylated by SIRT2. Ubiquitinated at Lys-530, Lys-536 and Lys-544 by the BCR(KLHL25) E3 ubiquitin ligase complex and UBR4, leading to its degradation. Ubiquitination is probably inhibited by acetylation at same site. BCR(KLHL25)-mediated degradation of ACLY promotes fatty acid oxidation and is required for differentiation of inducible regulatory T (iTreg) cells.

The protein resides in the cytoplasm. The protein localises to the cytosol. It catalyses the reaction oxaloacetate + acetyl-CoA + ADP + phosphate = citrate + ATP + CoA. With respect to regulation, phosphorylation results in activation of its activity. Glucose 6-phosphate, fructose 6-phosphate, fructose 2,6-bisphosphate, ribulose 5-phosphate, and fructose 1,6-bisphosphate also act as activators. In terms of biological role, catalyzes the cleavage of citrate into oxaloacetate and acetyl-CoA, the latter serving as common substrate in multiple biochemical reactions in protein, carbohydrate and lipid metabolism. In Bos taurus (Bovine), this protein is ATP-citrate synthase (ACLY).